Reading from the N-terminus, the 395-residue chain is Elongation factor Tu (395 aa).

The tr-type G domain occupies 10–204; that stretch reads KPHVNIGTIG…AIDNWIPLPQ (195 aa). Residues 19–26 form a G1 region; that stretch reads GHVDHGKT. 19 to 26 is a binding site for GTP; it reads GHVDHGKT. T26 serves as a coordination point for Mg(2+). The segment at 60-64 is G2; sequence GITIN. A G3 region spans residues 81 to 84; that stretch reads DCPG. GTP contacts are provided by residues 81–85 and 136–139; these read DCPGH and NKVD. Residues 136 to 139 form a G4 region; it reads NKVD. The tract at residues 174-176 is G5; it reads SAL.

This sequence belongs to the TRAFAC class translation factor GTPase superfamily. Classic translation factor GTPase family. EF-Tu/EF-1A subfamily. In terms of assembly, monomer.

The protein resides in the cytoplasm. The catalysed reaction is GTP + H2O = GDP + phosphate + H(+). In terms of biological role, GTP hydrolase that promotes the GTP-dependent binding of aminoacyl-tRNA to the A-site of ribosomes during protein biosynthesis. The chain is Elongation factor Tu from Azobacteroides pseudotrichonymphae genomovar. CFP2.